The primary structure comprises 94 residues: Beta-diguetoxin-Dc1a (94 aa).

The signal sequence occupies residues 1–17 (MKVFVVLLCLSLAAVYA). The propeptide occupies 18–38 (LEERLDKDADIMLDSPADMER). Cystine bridges form between cysteine 50-cysteine 63, cysteine 57-cysteine 77, cysteine 62-cysteine 91, and cysteine 79-cysteine 89.

It belongs to the neurotoxin 26 (DTX) family. Expressed by the venom gland.

The protein localises to the secreted. Functionally, insecticidal toxin. This toxin promotes opening of insect Nav channels. The toxin binds to the S1-S2 and S3-S4 loops in the domain II voltage-sensor of insect Nav channels (i.e., receptor site 4). The American cockroach P.americana is largely resistant to the effects of this toxin due to an unusual sequence within the domain II S1-S2 loop. In vivo, paralyzes lepidopteran and dipteran larvae. Paralyzed insects ultimately die from secondary effects of starvation and dehydration. The sequence is that of Beta-diguetoxin-Dc1a from Diguetia canities (Desert bush spider).